The following is a 247-amino-acid chain: Fasciclin-like arabinogalactan protein 6 (247 aa).

A signal peptide spans M1 to S23. Residues P36–L182 enclose the FAS1 domain. 5 N-linked (GlcNAc...) asparagine glycosylation sites follow: N38, N57, N70, N142, and N153. Residues T192–P212 show a composition bias toward low complexity. The interval T192–A221 is disordered. G222 carries GPI-anchor amidated glycine lipidation. Positions S223–A247 are cleaved as a propeptide — removed in mature form.

Belongs to the fasciclin-like AGP family.

It is found in the cell membrane. Functionally, may be a cell surface adhesion protein. The protein is Fasciclin-like arabinogalactan protein 6 (FLA6) of Arabidopsis thaliana (Mouse-ear cress).